Here is a 762-residue protein sequence, read N- to C-terminus: Protein PHTF1 (762 aa).

The PHTF domain maps to 6 to 150 (RDAISWYQKK…VHCQIVSTQI (145 aa)). 3 consecutive transmembrane segments (helical) span residues 77 to 97 (GLVRVVFFPLFSSWWIQVTSL), 99 to 119 (IFVWLLLLYLMQVIALVLYFM), and 121 to 141 (PIVNVSEVLGPLCLMLLMGTV). Positions 152 to 188 (RPSGNNGNRRRRKLRKTVNGDGSRENGNNSSDKARGV) are disordered. Asn179, Asn180, and Asn197 each carry an N-linked (GlcNAc...) asparagine glycan. Residues Ser272, Ser276, Ser277, Ser334, and Ser336 each carry the phosphoserine modification. Disordered stretches follow at residues 344-379 (SAAFSQGSRSGMSGGSRSLNMLRRDSESTRHDSETE) and 393-415 (RSSVTSDSEGAHVSSLHSGTKRD). Residues 348–361 (SQGSRSGMSGGSRS) are compositionally biased toward low complexity. A compositionally biased stretch (basic and acidic residues) spans 365 to 376 (LRRDSESTRHDS). A glycan (N-linked (GlcNAc...) asparagine) is linked at Asn431. The next 4 membrane-spanning stretches (helical) occupy residues 473 to 493 (GVGYQMLGNIVTIGLAFFPFL), 512 to 532 (EILTLFCGAPPVTPIIILSII), 611 to 631 (VVVSSVFLLTLSIAFICCAQV), and 645 to 665 (WEFLIWESALLLFLLRLASLG). N-linked (GlcNAc...) asparagine glycans are attached at residues Asn674 and Asn733. The chain crosses the membrane as a helical span at residues 737–757 (VVILSAVSGVISDLLGFNIRL).

As to quaternary structure, interacts with FEM1B.

It localises to the endoplasmic reticulum membrane. The protein resides in the golgi apparatus. It is found in the cis-Golgi network membrane. In Bos taurus (Bovine), this protein is Protein PHTF1 (PHTF1).